A 225-amino-acid chain; its full sequence is Chromosome partition protein MukE (225 aa).

The segment at Arg197–Glu225 is disordered. A compositionally biased stretch (acidic residues) spans Asp212 to Glu225.

The protein belongs to the MukE family. Interacts, and probably forms a ternary complex, with MukF and MukB. The complex formation is stimulated by calcium or magnesium.

The protein localises to the cytoplasm. Its subcellular location is the nucleoid. In terms of biological role, involved in chromosome condensation, segregation and cell cycle progression. May participate in facilitating chromosome segregation by condensation DNA from both sides of a centrally located replisome during cell division. Probably acts via its interaction with MukB and MukF. The polypeptide is Chromosome partition protein MukE (Escherichia coli O157:H7).